We begin with the raw amino-acid sequence, 212 residues long: Ion-translocating oxidoreductase complex subunit G (212 aa).

The helical transmembrane segment at 9 to 29 threads the bilayer; it reads GLLLGLFALLCTGLVAIVNQL. Threonine 176 is modified (FMN phosphoryl threonine).

Belongs to the RnfG family. The complex is composed of six subunits: RnfA, RnfB, RnfC, RnfD, RnfE and RnfG. FMN is required as a cofactor.

It is found in the cell inner membrane. In terms of biological role, part of a membrane-bound complex that couples electron transfer with translocation of ions across the membrane. This Shewanella piezotolerans (strain WP3 / JCM 13877) protein is Ion-translocating oxidoreductase complex subunit G.